A 338-amino-acid chain; its full sequence is Glyceraldehyde-3-phosphate dehydrogenase (338 aa).

Residues 13–14, Asp35, and Arg80 each bind NAD(+); that span reads RI. Residues 151–153, Thr182, 211–212, and Arg234 each bind D-glyceraldehyde 3-phosphate; these read SCT and TG. Cys152 acts as the Nucleophile in catalysis. NAD(+) is bound at residue Asn316.

This sequence belongs to the glyceraldehyde-3-phosphate dehydrogenase family. Homotetramer.

It is found in the cytoplasm. It catalyses the reaction D-glyceraldehyde 3-phosphate + phosphate + NAD(+) = (2R)-3-phospho-glyceroyl phosphate + NADH + H(+). Its pathway is carbohydrate degradation; glycolysis; pyruvate from D-glyceraldehyde 3-phosphate: step 1/5. The polypeptide is Glyceraldehyde-3-phosphate dehydrogenase (GPD) (Sclerotinia sclerotiorum (White mold)).